A 446-amino-acid polypeptide reads, in one-letter code: 4-aminobutyrate aminotransferase (446 aa).

Lys291 bears the N6-(pyridoxal phosphate)lysine mark.

The protein belongs to the class-III pyridoxal-phosphate-dependent aminotransferase family. The cofactor is pyridoxal 5'-phosphate.

The enzyme catalyses 4-aminobutanoate + 2-oxoglutarate = succinate semialdehyde + L-glutamate. The catalysed reaction is (S)-3-amino-2-methylpropanoate + 2-oxoglutarate = 2-methyl-3-oxopropanoate + L-glutamate. The protein operates within amino-acid degradation; 4-aminobutanoate degradation. The sequence is that of 4-aminobutyrate aminotransferase (gabT) from Mycobacterium leprae (strain TN).